The primary structure comprises 630 residues: Plastin-3 (630 aa).

EF-hand domains are found at residues 12 to 47 (DELDELKEAFAKVDLNSNGFICDYELHELFKEANMP) and 52 to 87 (KVREIIQKLMLDGDRNKDGKISFDEFVYIFQEVKSS). Ca(2+)-binding residues include D25, N27, N29, E36, D65, N67, D69, K71, and E76. Actin-binding stretches follow at residues 109–382 (TSEL…ALTK) and 383–627 (PENQ…GRGM). Calponin-homology (CH) domains follow at residues 123–239 (EEEK…KIGL) and 267–378 (LSPE…NKYP). S268, S293, S326, and S339 each carry phosphoserine. Phosphothreonine is present on T391. Calponin-homology (CH) domains follow at residues 397–506 (TREE…RRYT) and 518–627 (KAND…GRGM).

As to quaternary structure, monomer. As to expression, expressed in a variety of organs, including muscle, brain, uterus and esophagus.

It is found in the cytoplasm. Its function is as follows. Actin-bundling protein. This is Plastin-3 (PLS3) from Homo sapiens (Human).